The primary structure comprises 215 residues: N-(5'-phosphoribosyl)anthranilate isomerase (215 aa).

This sequence belongs to the TrpF family.

The catalysed reaction is N-(5-phospho-beta-D-ribosyl)anthranilate = 1-(2-carboxyphenylamino)-1-deoxy-D-ribulose 5-phosphate. Its pathway is amino-acid biosynthesis; L-tryptophan biosynthesis; L-tryptophan from chorismate: step 3/5. This Paramagnetospirillum magneticum (strain ATCC 700264 / AMB-1) (Magnetospirillum magneticum) protein is N-(5'-phosphoribosyl)anthranilate isomerase.